We begin with the raw amino-acid sequence, 558 residues long: Transcription termination factor MTEF18, mitochondrial (558 aa).

A mitochondrion-targeting transit peptide spans 1–58 (MFMVRLKFASISHNFSTVAAKHRRVPSKYKSLAIGKAQQAITDYLHTTRSLSYTHAEQ).

It belongs to the mTERF family.

The protein resides in the mitochondrion. Its function is as follows. Transcription termination factor involved in the regulation of mitochondrial-encoded gene expression. Essential for normal plant growth and development. The polypeptide is Transcription termination factor MTEF18, mitochondrial (Arabidopsis thaliana (Mouse-ear cress)).